Here is a 342-residue protein sequence, read N- to C-terminus: Dihydroorotate dehydrogenase (quinone) (342 aa).

Residues 60–64 and T84 each bind FMN; that span reads AGFDK. Residue K64 coordinates substrate. Position 109–113 (109–113) interacts with substrate; the sequence is NRMGF. Residues N137 and N170 each coordinate FMN. Residue N170 participates in substrate binding. The active-site Nucleophile is S173. Substrate is bound at residue N175. FMN is bound by residues K215 and T243. 244-245 provides a ligand contact to substrate; the sequence is NT. FMN contacts are provided by residues G266, G295, and 316–317; that span reads YT.

This sequence belongs to the dihydroorotate dehydrogenase family. Type 2 subfamily. In terms of assembly, monomer. FMN is required as a cofactor.

It is found in the cell membrane. It carries out the reaction (S)-dihydroorotate + a quinone = orotate + a quinol. It functions in the pathway pyrimidine metabolism; UMP biosynthesis via de novo pathway; orotate from (S)-dihydroorotate (quinone route): step 1/1. Catalyzes the conversion of dihydroorotate to orotate with quinone as electron acceptor. In Halorhodospira halophila (strain DSM 244 / SL1) (Ectothiorhodospira halophila (strain DSM 244 / SL1)), this protein is Dihydroorotate dehydrogenase (quinone).